The sequence spans 73 residues: Defensin-like protein 34 (73 aa).

An N-terminal signal peptide occupies residues 1–25; it reads MASNKVSFFLVLCLCVLSTAEFGEA. Disulfide bonds link Cys33-Cys59, Cys45-Cys68, and Cys49-Cys70.

The protein belongs to the DEFL family.

The protein resides in the secreted. This is Defensin-like protein 34 from Arabidopsis thaliana (Mouse-ear cress).